The chain runs to 1055 residues: Focal adhesion kinase 1 (1055 aa).

The interval 1–29 is disordered; it reads MAAAYLDPNLNHTPSSSTKTHLGTGTERS. The residue at position 2 (alanine 2) is an N-acetylalanine. Tyrosine 5 is modified (phosphotyrosine). The segment covering 10–27 has biased composition (polar residues); that stretch reads LNHTPSSSTKTHLGTGTE. Position 13 is a phosphothreonine (threonine 13). Phosphoserine occurs at positions 29 and 54. One can recognise an FERM domain in the interval 35-355; sequence RVLKVFHYFE…GYCRLVNGAT (321 aa). A Glycyl lysine isopeptide (Lys-Gly) (interchain with G-Cter in SUMO) cross-link involves residue lysine 152. A Phosphotyrosine; by autocatalysis modification is found at tyrosine 397. Tyrosine 407 carries the phosphotyrosine modification. The 259-residue stretch at 422–680 folds into the Protein kinase domain; that stretch reads IELGRCIGEG…ELKAQLSTIL (259 aa). ATP is bound by residues 428–434, lysine 454, and 500–502; these read IGEGQFG and ELC. Aspartate 546 serves as the catalytic Proton acceptor. Residues tyrosine 570 and tyrosine 576 each carry the phosphotyrosine modification. Tyrosine 577 is subject to Phosphotyrosine; by RET and SRC. The residue at position 580 (serine 580) is a Phosphoserine. Residues 685-697 show a composition bias toward basic and acidic residues; that stretch reads VQQEERMRMESRR. Disordered regions lie at residues 685–734 and 837–923; these read VQQE…PSPQ and VRLS…LDRS. Residues 707–1055 are interaction with TGFB1I1; it reads GSDEAPPKPS…LKMLGQTRPH (349 aa). Serine 722 carries the post-translational modification Phosphoserine. Serine 732 is modified (phosphoserine; by CDK5). The span at 837-849 shows a compositional bias: basic and acidic residues; the sequence is VRLSRGSIDREDG. Serine 843 carries the phosphoserine modification. A Phosphotyrosine modification is found at tyrosine 861. A compositionally biased stretch (pro residues) spans 869-880; that stretch reads PAAPPKKPPRPG. A compositionally biased stretch (polar residues) spans 886-896; that stretch reads SNLSSISSPAE. Serine 913 is subject to Phosphoserine. Residues 915–1055 form an interaction with ARHGEF28 region; that stretch reads PPTANLDRSN…LKMLGQTRPH (141 aa). Threonine 917 bears the Phosphothreonine mark. Residue tyrosine 928 is modified to Phosphotyrosine.

The protein belongs to the protein kinase superfamily. Tyr protein kinase family. FAK subfamily. As to quaternary structure, interacts with GIT1. Component of a complex that contains at least FER, CTTN and PTK2/FAK1. Interacts with BMX. Interacts with STEAP4. Interacts with ZFYVE21. Interacts with ESR1. Interacts with PIK3R1 or PIK3R2. Interacts with FGR, FLT4 and RET. Interacts with EPHA2 in resting cells; activation of EPHA2 recruits PTPN11, leading to dephosphorylation of PTK2/FAK1 and dissociation of the complex. Interacts with EPHA1 (kinase activity-dependent). Interacts with P53/TP53. Interacts (via first Pro-rich region) with CAS family members (via SH3 domain), including BCAR1, BCAR3, and CASS4. Interacts with NEDD9 (via SH3 domain). Interacts with TGFB1I1. Interacts with SRC, GRB2 and GRB7. Interacts with ARHGEF28. Interacts with SHB. Part of a complex composed of THSD1, PTK2/FAK1, TLN1 and VCL. Interacts with PXN and TLN1. Interacts with SORBS1. Interacts with STAT1. Interacts with WASL. Interacts with ARHGAP26 and SHC1. Interacts with RB1CC1; this inhibits PTK2/FAK1 activity and activation of downstream signaling pathways. Interacts with ARHGEF7. Interacts with MDM2. Interacts with PIAS1. Interacts with DCC. Interacts with LPXN (via LD motif 3). Interacts with MISP. Interacts with EMP2; regulates PTK2 activation and localization. Interacts with DSCAM. Interacts with AMBRA1. Interacts (when tyrosine-phosphorylated) with tensin TNS1; the interaction is increased by phosphorylation of TNS1. Phosphorylated on tyrosine residues upon activation, e.g. upon integrin signaling. Tyr-397 is the major autophosphorylation site, but other kinases can also phosphorylate this residue. Phosphorylation at Tyr-397 promotes interaction with SRC and SRC family members, leading to phosphorylation at Tyr-576, Tyr-577 and at additional tyrosine residues. FGR promotes phosphorylation at Tyr-397 and Tyr-576. FER promotes phosphorylation at Tyr-577, Tyr-861 and Tyr-928, even when cells are not adherent. Tyr-397, Tyr-576 and Ser-722 are phosphorylated only when cells are adherent. Phosphorylation at Tyr-397 is important for interaction with BMX, PIK3R1 and SHC1. Phosphorylation at Tyr-928 is important for interaction with GRB2. Dephosphorylated by PTPN11; PTPN11 is recruited to PTK2 via EPHA2 (tyrosine phosphorylated). Microtubule-induced dephosphorylation at Tyr-397 is crucial for the induction of focal adhesion disassembly; this dephosphorylation could be catalyzed by PTPN11 and regulated by ZFYVE21. Phosphorylation on tyrosine residues is enhanced by NTN1. In terms of processing, sumoylated; this enhances autophosphorylation.

Its subcellular location is the cell junction. The protein localises to the focal adhesion. It is found in the cell membrane. The protein resides in the cytoplasm. It localises to the perinuclear region. Its subcellular location is the cell cortex. The protein localises to the cytoskeleton. It is found in the microtubule organizing center. The protein resides in the centrosome. It localises to the nucleus. Its subcellular location is the cilium basal body. The enzyme catalyses L-tyrosyl-[protein] + ATP = O-phospho-L-tyrosyl-[protein] + ADP + H(+). Subject to autoinhibition, mediated by interactions between the FERM domain and the kinase domain. Activated by autophosphorylation at Tyr-397. This promotes interaction with SRC and phosphorylation at Tyr-576 and Tyr-577 in the kinase activation loop by SRC. Phosphorylation at Tyr-397, Tyr-576 and Tyr-577 is required for maximal kinase activity. In terms of biological role, non-receptor protein-tyrosine kinase that plays an essential role in regulating cell migration, adhesion, spreading, reorganization of the actin cytoskeleton, formation and disassembly of focal adhesions and cell protrusions, cell cycle progression, cell proliferation and apoptosis. Required for early embryonic development and placenta development. Required for embryonic angiogenesis, normal cardiomyocyte migration and proliferation, and normal heart development. Regulates axon growth and neuronal cell migration, axon branching and synapse formation; required for normal development of the nervous system. Plays a role in osteogenesis and differentiation of osteoblasts. Functions in integrin signal transduction, but also in signaling downstream of numerous growth factor receptors, G-protein coupled receptors (GPCR), EPHA2, netrin receptors and LDL receptors. Forms multisubunit signaling complexes with SRC and SRC family members upon activation; this leads to the phosphorylation of additional tyrosine residues, creating binding sites for scaffold proteins, effectors and substrates. Regulates numerous signaling pathways. Promotes activation of phosphatidylinositol 3-kinase and the AKT1 signaling cascade. Promotes activation of MAPK1/ERK2, MAPK3/ERK1 and the MAP kinase signaling cascade. Promotes localized and transient activation of guanine nucleotide exchange factors (GEFs) and GTPase-activating proteins (GAPs), and thereby modulates the activity of Rho family GTPases. Signaling via CAS family members mediates activation of RAC1. Phosphorylates NEDD9 following integrin stimulation. Recruits the ubiquitin ligase MDM2 to P53/TP53 in the nucleus, and thereby regulates P53/TP53 activity, P53/TP53 ubiquitination and proteasomal degradation. Phosphorylates SRC; this increases SRC kinase activity. Phosphorylates ACTN1, ARHGEF7, GRB7, RET and WASL. Promotes phosphorylation of PXN and STAT1; most likely PXN and STAT1 are phosphorylated by a SRC family kinase that is recruited to autophosphorylated PTK2/FAK1, rather than by PTK2/FAK1 itself. Promotes phosphorylation of BCAR1; GIT2 and SHC1; this requires both SRC and PTK2/FAK1. Promotes phosphorylation of BMX and PIK3R1. Its function is as follows. Does not contain a kinase domain and inhibits PTK2/FAK1 phosphorylation and signaling. Its enhanced expression can attenuate the nuclear accumulation of LPXN and limit its ability to enhance serum response factor (SRF)-dependent gene transcription. This is Focal adhesion kinase 1 from Rattus norvegicus (Rat).